The following is a 377-amino-acid chain: Presenilin-associated rhomboid-like protein, mitochondrial (377 aa).

A mitochondrion-targeting transit peptide spans 1 to 52 (MAWRGWAQRGWGCGQAWTLPVCGGSYEELTAALAPSRLLRRRFNFFIQQKCG). At 53-99 (FRKAPRKVEPRRSDTSSEAYKRSALIPPVEETAFYPSPYPIRTLVKP) the chain is on the mitochondrial matrix side. Phosphoserine is present on residues Ser65 and Ser68. A helical membrane pass occupies residues 100–119 (LFFTVGFTGCAFGSAAIWQY). At 120 to 165 (ESLKSKVQSYFDGIKADWLDSIRPQKEGDFRKEINKWWNNLSDGQR) the chain is on the mitochondrial intermembrane side. Residues 166 to 185 (TVTGIIAANVFVFCLWRVPS) traverse the membrane as a helical segment. Residues 186-205 (LQRTMIRYFTSNPASKVLCS) are Mitochondrial matrix-facing. The helical transmembrane segment at 206 to 228 (PMLLSTFSHFSLFHMAANMYVLW) threads the bilayer. Residues 229–242 (SFSSSIVNILGQEQ) lie on the Mitochondrial intermembrane side of the membrane. The chain crosses the membrane as a helical span at residues 243–260 (FMAVYLSAGVISTFVSYV). Residues 261–270 (CKVATGRYGP) are Mitochondrial matrix-facing. The chain crosses the membrane as a helical span at residues 271-287 (SLGASGAIMTVLAAVCT). The active-site Nucleophile is Ser275. Topologically, residues 288–293 (KIPEGR) are mitochondrial intermembrane. A helical transmembrane segment spans residues 294 to 316 (LAIIFLPMFTFTAGNALKAIIAM). Topologically, residues 317–330 (DTAGMILGWKFFDH) are mitochondrial matrix. Residues 331-352 (AAHLGGALFGIWYITYGHELIW) traverse the membrane as a helical segment. The active site involves His333. Over 353–377 (KNREPLVKIWHEMRTNSPKKGGGSK) the chain is Mitochondrial intermembrane.

The protein belongs to the peptidase S54 family. In terms of assembly, interacts with PSEN1 and PSEN2. Binds OPA1. P-beta is proteolytically processed (beta-cleavage) in a PARL-dependent manner.

It localises to the mitochondrion inner membrane. It is found in the nucleus. The catalysed reaction is Cleaves type-1 transmembrane domains using a catalytic dyad composed of serine and histidine that are contributed by different transmembrane domains.. Functionally, required for the control of apoptosis during postnatal growth. Essential for proteolytic processing of an antiapoptotic form of OPA1 which prevents the release of mitochondrial cytochrome c in response to intrinsic apoptotic signals. Required for the maturation of PINK1 into its 52kDa mature form after its cleavage by mitochondrial-processing peptidase (MPP). Promotes cleavage of serine/threonine-protein phosphatase PGAM5 in damaged mitochondria in response to loss of mitochondrial membrane potential. Mediates differential cleavage of PINK1 and PGAM5 depending on the health status of mitochondria, disassociating from PINK1 and associating with PGAM5 in response to mitochondrial membrane potential loss. Required for processing of CLPB into a form with higher protein disaggregase activity by removing an autoinhibitory N-terminal peptide. Promotes processing of DIABLO/SMAC in the mitochondrion which is required for DIABLO apoptotic activity. Also required for cleavage of STARD7 and TTC19. Promotes changes in mitochondria morphology regulated by phosphorylation of P-beta domain. This Bos taurus (Bovine) protein is Presenilin-associated rhomboid-like protein, mitochondrial (PARL).